The primary structure comprises 694 residues: Polyphosphate kinase (694 aa).

Asparagine 45 contacts ATP. Residues arginine 367 and arginine 397 each coordinate Mg(2+). Catalysis depends on histidine 427, which acts as the Phosphohistidine intermediate. The ATP site is built by tyrosine 460, arginine 553, and histidine 580.

Belongs to the polyphosphate kinase 1 (PPK1) family. Mg(2+) serves as cofactor. Post-translationally, an intermediate of this reaction is the autophosphorylated ppk in which a phosphate is covalently linked to a histidine residue through a N-P bond.

The enzyme catalyses [phosphate](n) + ATP = [phosphate](n+1) + ADP. Catalyzes the reversible transfer of the terminal phosphate of ATP to form a long-chain polyphosphate (polyP). The sequence is that of Polyphosphate kinase from Campylobacter jejuni subsp. jejuni serotype O:6 (strain 81116 / NCTC 11828).